A 179-amino-acid chain; its full sequence is Translationally-controlled tumor protein homolog (179 aa).

The region spanning Met-1 to Val-179 is the TCTP domain.

Belongs to the TCTP family.

It is found in the cytoplasm. The protein localises to the cytoskeleton. In terms of biological role, involved in protein synthesis. Involved in microtubule stabilization. The polypeptide is Translationally-controlled tumor protein homolog (Aspergillus fumigatus (strain ATCC MYA-4609 / CBS 101355 / FGSC A1100 / Af293) (Neosartorya fumigata)).